Reading from the N-terminus, the 591-residue chain is Solute carrier family 40 member 2, chloroplastic (591 aa).

The transit peptide at 1-66 directs the protein to the chloroplast; sequence MGMVTATAAA…RCYITNVEVD (66 aa). 11 consecutive transmembrane segments (helical) span residues 159-179, 206-226, 242-262, 293-313, 318-338, 391-411, 419-439, 452-472, 482-502, 518-540, and 547-569; these read WPAA…VGFF, GLNA…IYAM, WFIA…ALGV, LVCE…YHPV, IACG…QLIN, VATV…MTAL, PSIV…ATFI, AGAA…VVYW, LLIF…YDVV, LIGG…MAII, and FGFL…CQWL.

This sequence belongs to the ferroportin (FP) (TC 2.A.100) family. SLC40A subfamily.

The protein localises to the membrane. It is found in the plastid. The protein resides in the chloroplast envelope. Its function is as follows. May be involved in iron transport and iron homeostasis. The polypeptide is Solute carrier family 40 member 2, chloroplastic (Oryza sativa subsp. japonica (Rice)).